The chain runs to 797 residues: Xaa-Pro dipeptidyl-peptidase (797 aa).

Residues Ser-370, Asp-490, and His-521 each act as charge relay system in the active site.

It belongs to the peptidase S15 family. In terms of assembly, homodimer.

It is found in the cytoplasm. It catalyses the reaction Hydrolyzes Xaa-Pro-|- bonds to release unblocked, N-terminal dipeptides from substrates including Ala-Pro-|-p-nitroanilide and (sequentially) Tyr-Pro-|-Phe-Pro-|-Gly-Pro-|-Ile.. Removes N-terminal dipeptides sequentially from polypeptides having unsubstituted N-termini provided that the penultimate residue is proline. The sequence is that of Xaa-Pro dipeptidyl-peptidase from Lacticaseibacillus rhamnosus (Lactobacillus rhamnosus).